Here is a 329-residue protein sequence, read N- to C-terminus: U5 small nuclear ribonucleoprotein TSSC4 (329 aa).

Disordered regions lie at residues 1-88 (MAEA…MSST) and 104-156 (ARRA…PDYV). Low complexity predominate over residues 22–41 (DTLPSDTVSLSDSDSDLSLP). 6 positions are modified to phosphoserine: Ser60, Ser67, Ser86, Ser132, Ser143, and Ser146. The segment at 77–104 (VQPFHLRGMSSTFSQRSRDIFDCLEGAA) is hom2; mediates interaction with the U5 snRNP complexes and required for spliceosomal tri-snRNP complex assembly. The tract at residues 149 to 316 (VPPVPDYVAH…SRKRSRDHFR (168 aa)) is interaction with SNRNP200. Residues 150-186 (PPVPDYVAHPERWTKYSLEDVTEVSEQSNQATALAFL) form a hom3; mediates interaction with the U5 snRNP complexes region. The interval 201 to 250 (FNQDPSSCGEGRVIFTKPVRGVEARHERKRVLGKVGEPGRGGLGNPATDR) is hom4; necessary for interaction with the PRPF19 complex and required for spliceosomal tri-snRNP complex assembly. Lys217 is subject to N6-acetyllysine. The interval 221-329 (GVEARHERKR…SSPEDPGAEV (109 aa)) is disordered. Position 265 is a phosphoserine (Ser265). Positions 306–317 (GSRKRSRDHFRN) are enriched in basic residues. Ser321 carries the phosphoserine modification.

Belongs to the TSSC4 family. As to quaternary structure, interacts in a RNA-independent manner with distinct U5 snRNP-containing complexes, the mono-U5 snRNP and the post-splicing U5 snRNP-PRPF19 complex. Interacts with SNRNP200; the interaction is direct, excludes recruitment of C9ORF78 and WBP4 to SNRNP200 and negatively regulates its RNA helicase activity. Interacts with PRPF8; the interaction is direct. As to expression, expressed in fetal brain, lung, liver and kidney. Widely expressed in adult tissues.

The protein resides in the nucleus. It is found in the cytoplasm. Its function is as follows. Protein associated with the U5 snRNP, during its maturation and its post-splicing recycling and which is required for spliceosomal tri-snRNP complex assembly in the nucleus. Has a molecular sequestering activity and transiently hinders SNRNP200 binding sites for constitutive splicing factors that intervene later during the assembly of the spliceosome and splicing. Together with its molecular sequestering activity, may also function as a molecular adapter and placeholder, coordinating the assembly of the U5 snRNP and its association with the U4/U6 di-snRNP. The sequence is that of U5 small nuclear ribonucleoprotein TSSC4 from Homo sapiens (Human).